A 261-amino-acid polypeptide reads, in one-letter code: Transmembrane protein 106A (261 aa).

The segment at 1 to 23 (MGKAVSQLTSRKDEDKPILPDNP) is disordered. Residues 93-113 (LFVFLSVAICLLIFSLTIFFL) traverse the membrane as a helical segment.

Belongs to the TMEM106 family. In terms of tissue distribution, expressed in liver, spleen, lung, kidney, lymph nodes and adipose tissue (at protein level). Expressed by macrophages.

It is found in the cell membrane. Its function is as follows. Activates macrophages and polarizes them into M1-like macrophages through the activation of the MAPK and NF-kappaB signaling pathway. Upon activation, up-regulates the expression of CD80, CD86, CD69 and MHC II on macrophages, and induces the release of pro-inflammatory cytokines such as TNF, IL1B, IL6, CCL2 and nitric oxide. May play a role in inhibition of proliferation and migration. This Mus musculus (Mouse) protein is Transmembrane protein 106A (Tmem106a).